The chain runs to 373 residues: Glutamate 5-kinase (373 aa).

ATP is bound at residue Lys15. Residues Ser55, Asp142, and Asn154 each coordinate substrate. ATP is bound by residues 174–175 (TD) and 216–222 (TGGMVTK). The region spanning 281–359 (SGRVIVDDGA…GEIEAILGYK (79 aa)) is the PUA domain.

Belongs to the glutamate 5-kinase family.

It is found in the cytoplasm. It carries out the reaction L-glutamate + ATP = L-glutamyl 5-phosphate + ADP. Its pathway is amino-acid biosynthesis; L-proline biosynthesis; L-glutamate 5-semialdehyde from L-glutamate: step 1/2. Catalyzes the transfer of a phosphate group to glutamate to form L-glutamate 5-phosphate. The chain is Glutamate 5-kinase from Geobacter metallireducens (strain ATCC 53774 / DSM 7210 / GS-15).